Consider the following 266-residue polypeptide: Enterotoxin type C-1 (266 aa).

A signal peptide spans 1–27 (MNKSRFISCVILIFALILVLFTPNVLA). Cys120 and Cys137 are oxidised to a cystine.

This sequence belongs to the staphylococcal/streptococcal toxin family. As to quaternary structure, interacts with host MHC class II molecules composed of alpha/HLA-DRA and beta/HLA-DRB1 chains.

The protein resides in the secreted. Functionally, staphylococcal enterotoxin that activates the host immune system by binding as unprocessed molecules to major histocompatibility (MHC) complex class II and T-cell receptor (TCR) molecules. In turn, this ternary complex activates a large number of T-lymphocytes initiating a systemic release of pro-inflammatory cytokines. Inhibits SEC1-mediated T-cell activation in the absence of MHC class II by competing with SEC1 for binding to the host TCR. Also causes the intoxication staphylococcal food poisoning syndrome. This Staphylococcus aureus protein is Enterotoxin type C-1 (entC1).